The following is a 548-amino-acid chain: Adenine deaminase (548 aa).

The protein belongs to the metallo-dependent hydrolases superfamily. Adenine deaminase family. Mn(2+) is required as a cofactor.

The catalysed reaction is adenine + H2O + H(+) = hypoxanthine + NH4(+). The polypeptide is Adenine deaminase (Borreliella afzelii (strain PKo) (Borrelia afzelii)).